The chain runs to 325 residues: MIWEVTKLRISMILSAIAILVLGFALIYGILGYFFGFSNAPLLITGALAFVTIFTILQWLFGPALIKSIYHLTEVDPTDPQYGWVYNLVQEVAMYNRMNTPKVYIANVPFPNAFAFESPIYGKNMAITLPLLRMLTPEEVKAVIGHEIGHLRHKDTELLLAVGLIPTLLYWIGYGLWWGGLLGGGGGGRNDNSGILFLIGIALIAFSFLFNLFVLFLNRMREAYADVNSAITVPNGAKNLQTALAKIVLSTDPDIIERYKKKYGQIGSMLLFSGFQINEDIPAYKVQELVEYWRNIKVSPFADIFSDHPHPAKRIQLLEKLTHTQ.

2 helical membrane passes run 17–37 (IAILVLGFALIYGILGYFFGF) and 42–62 (LLITGALAFVTIFTILQWLFG). His146 lines the Zn(2+) pocket. Glu147 is a catalytic residue. His150 contributes to the Zn(2+) binding site. Transmembrane regions (helical) follow at residues 158 to 178 (LLLAVGLIPTLLYWIGYGLWW) and 195 to 215 (ILFLIGIALIAFSFLFNLFVL). Glu222 lines the Zn(2+) pocket.

Belongs to the peptidase M48B family. Zn(2+) serves as cofactor.

The protein localises to the cell membrane. This is Protease HtpX homolog 2 from Sulfurisphaera tokodaii (strain DSM 16993 / JCM 10545 / NBRC 100140 / 7) (Sulfolobus tokodaii).